We begin with the raw amino-acid sequence, 368 residues long: Aminomethyltransferase (368 aa).

It belongs to the GcvT family. As to quaternary structure, the glycine cleavage system is composed of four proteins: P, T, L and H.

It carries out the reaction N(6)-[(R)-S(8)-aminomethyldihydrolipoyl]-L-lysyl-[protein] + (6S)-5,6,7,8-tetrahydrofolate = N(6)-[(R)-dihydrolipoyl]-L-lysyl-[protein] + (6R)-5,10-methylene-5,6,7,8-tetrahydrofolate + NH4(+). Functionally, the glycine cleavage system catalyzes the degradation of glycine. This Alkaliphilus oremlandii (strain OhILAs) (Clostridium oremlandii (strain OhILAs)) protein is Aminomethyltransferase.